The following is a 360-amino-acid chain: Phenylalanine--tRNA ligase alpha subunit (360 aa).

Position 260 (Glu260) interacts with Mg(2+).

It belongs to the class-II aminoacyl-tRNA synthetase family. Phe-tRNA synthetase alpha subunit type 1 subfamily. Tetramer of two alpha and two beta subunits. Requires Mg(2+) as cofactor.

The protein localises to the cytoplasm. It carries out the reaction tRNA(Phe) + L-phenylalanine + ATP = L-phenylalanyl-tRNA(Phe) + AMP + diphosphate + H(+). The polypeptide is Phenylalanine--tRNA ligase alpha subunit (Afipia carboxidovorans (strain ATCC 49405 / DSM 1227 / KCTC 32145 / OM5) (Oligotropha carboxidovorans)).